Here is a 219-residue protein sequence, read N- to C-terminus: C-type lectin domain family 4 member E (219 aa).

Over 1–19 (MNSSKSSETQCTERGCFSS) the chain is Cytoplasmic. Residues 20–40 (QMFLWTVAGIPILFLSACFIT) form a helical; Signal-anchor for type II membrane protein membrane-spanning segment. Topologically, residues 41–219 (RCVVTFRIFQ…INPLNKGKSL (179 aa)) are extracellular. A glycan (N-linked (GlcNAc...) asparagine) is linked at N62. The cysteines at positions 80 and 91 are disulfide-linked. One can recognise a C-type lectin domain in the interval 87 to 206 (FQSSCYFFST…CFLNYFRICE (120 aa)). An N-linked (GlcNAc...) asparagine glycan is attached at N107. 2 disulfide bridges follow: C108/C205 and C179/C197. The Ca(2+) site is built by V117, N119, E123, E169, N171, N193, D194, and E206. A Confers specificity for glucose/mannose-type carbohydrates motif is present at residues 169–171 (EPN).

In terms of assembly, monomer and homodimer. Interacts with signaling adapter Fc receptor gamma chain/FCER1G to form a functional complex; the interaction is direct. Alternatively, acts as a bridge for interaction between CLEC4D and FCER1G. A heterodimer of CLEC4E and CLEC4D associates with FCER1G to form a functional complex. Interacts with SAP130 nuclear protein that is released from necrotic cells; the interaction is direct. In terms of tissue distribution, expressed in monocytes and macrophages.

Its subcellular location is the cell membrane. The protein resides in the cell projection. The protein localises to the phagocytic cup. In terms of biological role, calcium-dependent lectin that acts as a pattern recognition receptor (PRR) of the innate immune system: recognizes damage-associated molecular patterns (DAMPs) of abnormal self and pathogen-associated molecular patterns (PAMPs) of bacteria and fungi. The PAMPs notably include mycobacterial trehalose 6,6'-dimycolate (TDM), a cell wall glycolipid with potent adjuvant immunomodulatory functions. Interacts with signaling adapter Fc receptor gamma chain/FCER1G to form a functional complex in myeloid cells. Binding of mycobacterial trehalose 6,6'-dimycolate (TDM) to this receptor complex leads to phosphorylation of the immunoreceptor tyrosine-based activation motif (ITAM) of FCER1G, triggering activation of SYK, CARD9 and NF-kappa-B, consequently driving maturation of antigen-presenting cells and shaping antigen-specific priming of T-cells toward effector T-helper 1 and T-helper 17 cell subtypes. Also recognizes alpha-mannose residues on pathogenic fungi of the genus Malassezia and mediates macrophage activation. Through recognition of DAMPs released upon nonhomeostatic cell death, enables immune sensing of damaged self and promotes inflammatory cell infiltration into the damaged tissue. The protein is C-type lectin domain family 4 member E of Homo sapiens (Human).